A 282-amino-acid chain; its full sequence is Deoxyribonuclease-1 (282 aa).

The signal sequence occupies residues 1–22; sequence MRGMKLLGALLALAALLQGAVS. N-linked (GlcNAc...) asparagine glycosylation occurs at Asn40. The active site involves Glu100. A disulfide bond links Cys123 and Cys126. N-linked (GlcNAc...) asparagine glycosylation is present at Asn128. The active site involves His156. Cysteines 195 and 231 form a disulfide.

It belongs to the DNase I family. It depends on Ca(2+) as a cofactor. Mg(2+) serves as cofactor. Principally in tissues of the digestive system. Highest levels found in urine, but also relatively abundant in semen and saliva.

Its subcellular location is the secreted. It is found in the zymogen granule. The protein localises to the nucleus envelope. The enzyme catalyses Endonucleolytic cleavage to 5'-phosphodinucleotide and 5'-phosphooligonucleotide end-products.. In terms of biological role, serum endocuclease secreted into body fluids by a wide variety of exocrine and endocrine organs. Expressed by non-hematopoietic tissues and preferentially cleaves protein-free DNA. Among other functions, seems to be involved in cell death by apoptosis. Binds specifically to G-actin and blocks actin polymerization. Together with DNASE1L3, plays a key role in degrading neutrophil extracellular traps (NETs). NETs are mainly composed of DNA fibers and are released by neutrophils to bind pathogens during inflammation. Degradation of intravascular NETs by DNASE1 and DNASE1L3 is required to prevent formation of clots that obstruct blood vessels and cause organ damage following inflammation. The polypeptide is Deoxyribonuclease-1 (Homo sapiens (Human)).